A 488-amino-acid polypeptide reads, in one-letter code: Alpha-ketoglutaric semialdehyde dehydrogenase (488 aa).

NAD(+) contacts are provided by residues lysine 180 and 233 to 238 (GSNQVG). Glutamate 255 serves as the catalytic Proton acceptor. The active-site Nucleophile is the cysteine 289. NAD(+) contacts are provided by glutamine 336 and glutamate 390.

This sequence belongs to the aldehyde dehydrogenase family. Homotetramer.

The enzyme catalyses 2,5-dioxopentanoate + NADP(+) + H2O = 2-oxoglutarate + NADPH + 2 H(+). It carries out the reaction 2,5-dioxopentanoate + NAD(+) + H2O = 2-oxoglutarate + NADH + 2 H(+). Functionally, catalyzes the NAD(P)(+)-dependent oxidation of alpha-ketoglutaric semialdehyde (alphaKGSA) to alpha-ketoglutarate. Prefers NADP(+) to NAD(+) as a cosubstrate. In vitro, can also use various aldehydes. This chain is Alpha-ketoglutaric semialdehyde dehydrogenase, found in Bacillus subtilis (strain 168).